Here is a 293-residue protein sequence, read N- to C-terminus: MPFVKVIKNKAYFKRYQVKFRRRREGKTDYRARKRLVVQDKNKYNTPKYRIVIRFTNTDIICQIIYAKIEGDKVLVSAYAHELPRYGVKVGLTNYAAAYCTGLLLARRLLTNLGLADKYAGQTDIDGEDFNVEHMGDGPRPFRAFLDVGLTRTTTGNRVFAAMKGAVDGGIDIPHSPSRFVGYDEESSQLEADKLRQYIFGGHVSDYMKYLQEEDEEKYKAHFSRFIKEGITADSMEQMYRDAHAKIRANPAHEKKQPRDGLVKKRWNRAKMSLKQKRDRVKQKKAAYLKTLE.

The span at 247-263 shows a compositional bias: basic and acidic residues; the sequence is IRANPAHEKKQPRDGLV. Residues 247-283 form a disordered region; it reads IRANPAHEKKQPRDGLVKKRWNRAKMSLKQKRDRVKQ. The segment covering 264 to 283 has biased composition (basic residues); sequence KKRWNRAKMSLKQKRDRVKQ.

This sequence belongs to the universal ribosomal protein uL18 family. In terms of assembly, component of the large ribosomal subunit (LSU).

It localises to the cytoplasm. It is found in the nucleus. In terms of biological role, component of the ribosome, a large ribonucleoprotein complex responsible for the synthesis of proteins in the cell. The small ribosomal subunit (SSU) binds messenger RNAs (mRNAs) and translates the encoded message by selecting cognate aminoacyl-transfer RNA (tRNA) molecules. The large subunit (LSU) contains the ribosomal catalytic site termed the peptidyl transferase center (PTC), which catalyzes the formation of peptide bonds, thereby polymerizing the amino acids delivered by tRNAs into a polypeptide chain. The nascent polypeptides leave the ribosome through a tunnel in the LSU and interact with protein factors that function in enzymatic processing, targeting, and the membrane insertion of nascent chains at the exit of the ribosomal tunnel. The sequence is that of Large ribosomal subunit protein uL18 (RPL5) from Suberites domuncula (Sponge).